A 479-amino-acid chain; its full sequence is Aldehyde dehydrogenase family 3 member B3 (479 aa).

Active-site residues include Glu223 and Cys257. Cys476 carries S-geranylgeranyl cysteine lipidation. Residues 477–479 constitute a propeptide, removed in mature form; the sequence is TLL.

This sequence belongs to the aldehyde dehydrogenase family. Post-translationally, geranylgeranylation is important for membrane localization and enzyme activity. As to expression, expressed in testis, kidney, small intestine, spleen, white adipose tissue, liver and lung.

It localises to the cell membrane. It carries out the reaction an aldehyde + NAD(+) + H2O = a carboxylate + NADH + 2 H(+). It catalyses the reaction hexadecanoate + NADH + 2 H(+) = hexadecanal + NAD(+) + H2O. The catalysed reaction is octanal + NAD(+) + H2O = octanoate + NADH + 2 H(+). In terms of biological role, oxidizes medium and long chain aldehydes into non-toxic fatty acids. The polypeptide is Aldehyde dehydrogenase family 3 member B3 (Mus musculus (Mouse)).